We begin with the raw amino-acid sequence, 177 residues long: Large ribosomal subunit protein uL6 (177 aa).

It belongs to the universal ribosomal protein uL6 family. As to quaternary structure, part of the 50S ribosomal subunit.

In terms of biological role, this protein binds to the 23S rRNA, and is important in its secondary structure. It is located near the subunit interface in the base of the L7/L12 stalk, and near the tRNA binding site of the peptidyltransferase center. The sequence is that of Large ribosomal subunit protein uL6 from Cupriavidus metallidurans (strain ATCC 43123 / DSM 2839 / NBRC 102507 / CH34) (Ralstonia metallidurans).